Here is a 383-residue protein sequence, read N- to C-terminus: MEPRAVGVSKQDIREQIWGYMESQNLADFPRPVHHRIPNFKGSYLACQNIKDLDVFARTQEVKVDPDKPLEGVRLLVLQSKKTLLVPTPRLRTGLFNKITPPPGATKDILRKCATSQGVRNYSVPIGLDSRVLVDLVVVGSVAVSEKGWRIGKGEGYADLEYAMMVSMGAVSKETPVVTIVHDCQVVDIPEELVEEHDITVDYILTPTRVIATGCKRPKPMGITWFKISLEMMEKIPILRSLRAREQQAGKDVTLQGEHQHLPEPGCQQTVPLSVGRRPPDTPGPETNSMEAAPGSPPGEGAPLAADVYVGNLPGDARVSDLKRALRELGSVPLRLTWQGPRRRAFLHYPDSAAAQQAVSCLQGLRLGTDTLRVALARQQRDK.

The disordered stretch occupies residues 249–301 (AGKDVTLQGEHQHLPEPGCQQTVPLSVGRRPPDTPGPETNSMEAAPGSPPGEG). The RRM domain maps to 306–379 (ADVYVGNLPG…DTLRVALARQ (74 aa)).

The protein is Methenyltetrahydrofolate synthase domain-containing protein (MTHFSD) of Homo sapiens (Human).